Consider the following 130-residue polypeptide: L-ectoine synthase (130 aa).

Belongs to the ectoine synthase family.

It catalyses the reaction (2S)-4-acetamido-2-aminobutanoate = L-ectoine + H2O. It participates in amine and polyamine biosynthesis; ectoine biosynthesis; L-ectoine from L-aspartate 4-semialdehyde: step 3/3. Catalyzes the circularization of gamma-N-acetyl-alpha,gamma-diaminobutyric acid (ADABA) to ectoine (1,4,5,6-tetrahydro-2-methyl-4-pyrimidine carboxylic acid), which is an excellent osmoprotectant. The protein is L-ectoine synthase of Mycolicibacterium gilvum (strain PYR-GCK) (Mycobacterium gilvum (strain PYR-GCK)).